The chain runs to 348 residues: Histidinol-phosphate aminotransferase (348 aa).

The residue at position 210 (Lys210) is an N6-(pyridoxal phosphate)lysine.

The protein belongs to the class-II pyridoxal-phosphate-dependent aminotransferase family. Histidinol-phosphate aminotransferase subfamily. Homodimer. Pyridoxal 5'-phosphate is required as a cofactor.

The catalysed reaction is L-histidinol phosphate + 2-oxoglutarate = 3-(imidazol-4-yl)-2-oxopropyl phosphate + L-glutamate. It participates in amino-acid biosynthesis; L-histidine biosynthesis; L-histidine from 5-phospho-alpha-D-ribose 1-diphosphate: step 7/9. The protein is Histidinol-phosphate aminotransferase of Cytophaga hutchinsonii (strain ATCC 33406 / DSM 1761 / CIP 103989 / NBRC 15051 / NCIMB 9469 / D465).